A 468-amino-acid polypeptide reads, in one-letter code: Methionine aminopeptidase 2 (468 aa).

Residues A63–G74 are compositionally biased toward basic and acidic residues. Residues A63 to A87 are disordered. Residue H219 participates in substrate binding. A divalent metal cation-binding residues include D239, D250, and H319. A substrate-binding site is contributed by H327. Residues E352 and E449 each coordinate a divalent metal cation.

It belongs to the peptidase M24A family. Methionine aminopeptidase eukaryotic type 2 subfamily. The cofactor is Co(2+). Requires Zn(2+) as cofactor. It depends on Mn(2+) as a cofactor. Fe(2+) serves as cofactor.

It localises to the cytoplasm. It carries out the reaction Release of N-terminal amino acids, preferentially methionine, from peptides and arylamides.. Inhibited by the fumagillin analog, TNP-470. Functionally, cotranslationally removes the N-terminal methionine from nascent proteins. The N-terminal methionine is often cleaved when the second residue in the primary sequence is small and uncharged (Met-Ala-, Cys, Gly, Pro, Ser, Thr, or Val). Required for germ cell proliferation and/or differentiation. In Caenorhabditis elegans, this protein is Methionine aminopeptidase 2.